We begin with the raw amino-acid sequence, 198 residues long: MICOS complex subunit MIC26 (198 aa).

The signal sequence occupies residues 1–25; that stretch reads MFKVIQRSVGPASLSLLTFKVYAAP. Residues 108–128 traverse the membrane as a helical segment; the sequence is PGFFPRLGVIGFAGLIGLLLA. The O-linked (Xyl...) (chondroitin sulfate) serine glycan is linked to Ser162.

Belongs to the apolipoprotein O/MICOS complex subunit Mic27 family. Component of the mitochondrial contact site and cristae organizing system (MICOS) complex, composed of at least MICOS10/MIC10, CHCHD3/MIC19, CHCHD6/MIC25, APOOL/MIC27, IMMT/MIC60, APOO/MIC23/MIC26 and MICOS13/MIC13. This complex was also known under the names MINOS or MitOS complex. he MICOS complex associates with mitochondrial outer membrane proteins SAMM50, MTX1 and MTX2 (together described as components of the mitochondrial outer membrane sorting assembly machinery (SAM) complex) and DNAJC11, mitochondrial inner membrane protein TMEM11 and with HSPA9. The MICOS and SAM complexes together with DNAJC11 are part of a large protein complex spanning both membranes termed the mitochondrial intermembrane space bridging (MIB) complex. Interacts with IMMT/MIC60. Interacts with MICOS10/MIC10 and APOOL/MIC27. In terms of processing, O-glycosylation; glycosaminoglycan of chondroitin-sulfate type. As to expression, expressed in all tissues examined. Up-regulated in diabetic heart.

It localises to the mitochondrion inner membrane. The protein resides in the secreted. Its subcellular location is the mitochondrion. It is found in the golgi apparatus membrane. The protein localises to the endoplasmic reticulum membrane. Its function is as follows. Component of the MICOS complex, a large protein complex of the mitochondrial inner membrane that plays crucial roles in the maintenance of crista junctions, inner membrane architecture, and formation of contact sites to the outer membrane. Plays a crucial role in crista junction formation and mitochondrial function. Can promote cardiac lipotoxicity by enhancing mitochondrial respiration and fatty acid metabolism in cardiac myoblasts. Promotes cholesterol efflux from macrophage cells. Detected in HDL, LDL and VLDL. Secreted by a microsomal triglyceride transfer protein (MTTP)-dependent mechanism, probably as a VLDL-associated protein that is subsequently transferred to HDL. This chain is MICOS complex subunit MIC26 (APOO), found in Homo sapiens (Human).